The sequence spans 83 residues: Large ribosomal subunit protein eL37 (83 aa).

Cysteine 19, cysteine 22, cysteine 34, and cysteine 37 together coordinate Zn(2+). The C4-type zinc-finger motif lies at 19–37; sequence CRRCGRNSYHVQWERCAAC.

It belongs to the eukaryotic ribosomal protein eL37 family. Zn(2+) is required as a cofactor.

Functionally, binds to the 23S rRNA. In Leishmania donovani, this protein is Large ribosomal subunit protein eL37 (RPL37).